Consider the following 324-residue polypeptide: Tubulin alpha-8 chain (324 aa).

Positions 15, 19, 20, 54, 81, and 103 each coordinate GTP. E129 is an active-site residue.

The protein belongs to the tubulin family. In terms of assembly, dimer of alpha and beta chains. A typical microtubule is a hollow water-filled tube with an outer diameter of 25 nm and an inner diameter of 15 nM. Alpha-beta heterodimers associate head-to-tail to form protofilaments running lengthwise along the microtubule wall with the beta-tubulin subunit facing the microtubule plus end conferring a structural polarity. Microtubules usually have 13 protofilaments but different protofilament numbers can be found in some organisms and specialized cells. It depends on Mg(2+) as a cofactor. Some glutamate residues at the C-terminus are polyglycylated, resulting in polyglycine chains on the gamma-carboxyl group. Glycylation is mainly limited to tubulin incorporated into axonemes (cilia and flagella) whereas glutamylation is prevalent in neuronal cells, centrioles, axonemes, and the mitotic spindle. Both modifications can coexist on the same protein on adjacent residues, and lowering polyglycylation levels increases polyglutamylation, and reciprocally. The precise function of polyglycylation is still unclear. In terms of processing, some glutamate residues at the C-terminus are polyglutamylated, resulting in polyglutamate chains on the gamma-carboxyl group. Polyglutamylation plays a key role in microtubule severing by spastin (SPAST). SPAST preferentially recognizes and acts on microtubules decorated with short polyglutamate tails: severing activity by SPAST increases as the number of glutamates per tubulin rises from one to eight, but decreases beyond this glutamylation threshold.

It localises to the cytoplasm. The protein resides in the cytoskeleton. It carries out the reaction GTP + H2O = GDP + phosphate + H(+). Tubulin is the major constituent of microtubules, a cylinder consisting of laterally associated linear protofilaments composed of alpha- and beta-tubulin heterodimers. Microtubules grow by the addition of GTP-tubulin dimers to the microtubule end, where a stabilizing cap forms. Below the cap, tubulin dimers are in GDP-bound state, owing to GTPase activity of alpha-tubulin. This chain is Tubulin alpha-8 chain, found in Gallus gallus (Chicken).